The following is a 207-amino-acid chain: UPF0319 protein VV2327 (207 aa).

Residues 1–18 (MLRVLGLAGMLMSFNIHA) form the signal peptide.

It belongs to the UPF0319 family.

The polypeptide is UPF0319 protein VV2327 (Vibrio vulnificus (strain YJ016)).